An 893-amino-acid chain; its full sequence is Protein bride of sevenless (893 aa).

The first 30 residues, 1–30, serve as a signal peptide directing secretion; that stretch reads MSGLQLIWKSPTQLVLFVLLITISCIDLCH. The Extracellular segment spans residues 32 to 530; it reads VGAATPTKKS…RIKLDTWVAT (499 aa). Disordered stretches follow at residues 36–66 and 82–102; these read TPTKKSPPVRITKPQPVSSTTTAIPTTNEGS and GTASSASSSSNGGSDDSSSTT. Residues 50–66 show a composition bias toward polar residues; sequence QPVSSTTTAIPTTNEGS. N-linked (GlcNAc...) asparagine glycans are attached at residues N183, N307, N328, N471, and N482. 8 helical membrane passes run 531–551, 563–583, 607–627, 630–650, 653–673, 692–712, 722–742, and 752–772; these read GLTAAILGLIATLAILVFIVV, PVTSILLLLSLILVFCSFVPF, LCGVRVFIMTLVYCFVFSLLL, AVMLASIGSEGGFLSHVNGYI, IICVLSVFVQVGMSVQLLVVM, WGLLAYDFLLLCSLVSLVPFI, GILIVIGAVLILIIWSVWIAL, and AAIPLGMQASGWAVLVGILIP. The Cytoplasmic segment spans residues 773-893; that stretch reads RTFLIVRGIE…SPDHSKITRF (121 aa). A disordered region spans residues 858–893; that stretch reads ANINPQRPPPHPQQSPSRSSVCSLPPSPDHSKITRF.

The protein belongs to the G-protein coupled receptor 3 family.

It localises to the cell membrane. Its function is as follows. Acts as a ligand for sevenless tyrosine-kinase receptor during eye development. This is Protein bride of sevenless (boss) from Drosophila virilis (Fruit fly).